The primary structure comprises 329 residues: GTPase Obg (329 aa).

In terms of domain architecture, Obg spans 1–159 (MQFIDQARIT…WFLQLELKLL (159 aa)). Positions 160-328 (AEVGIIGLPN…LLAQVWKELG (169 aa)) constitute an OBG-type G domain. ATP is bound by residues 166-173 (GLPNAGKS), 191-195 (FTTLV), 213-216 (DIPG), 280-283 (NKQE), and 309-311 (SAA). The Mg(2+) site is built by S173 and T193.

It belongs to the TRAFAC class OBG-HflX-like GTPase superfamily. OBG GTPase family. As to quaternary structure, monomer. Requires Mg(2+) as cofactor.

Its subcellular location is the cytoplasm. Functionally, an essential GTPase which binds GTP, GDP and possibly (p)ppGpp with moderate affinity, with high nucleotide exchange rates and a fairly low GTP hydrolysis rate. Plays a role in control of the cell cycle, stress response, ribosome biogenesis and in those bacteria that undergo differentiation, in morphogenesis control. This is GTPase Obg from Prochlorococcus marinus (strain MIT 9303).